The sequence spans 70 residues: Small, acid-soluble spore protein I (70 aa).

Belongs to the SspI family.

Its subcellular location is the spore core. This chain is Small, acid-soluble spore protein I, found in Bacillus cytotoxicus (strain DSM 22905 / CIP 110041 / 391-98 / NVH 391-98).